We begin with the raw amino-acid sequence, 463 residues long: Fumarate hydratase class II (463 aa).

Residues 98-100 (SGT), 129-132 (HPND), 139-141 (SSN), and threonine 187 each bind substrate. Catalysis depends on histidine 188, which acts as the Proton donor/acceptor. Serine 318 is a catalytic residue. Substrate-binding positions include serine 319 and 324–326 (KVN).

It belongs to the class-II fumarase/aspartase family. Fumarase subfamily. As to quaternary structure, homotetramer.

It localises to the cytoplasm. The catalysed reaction is (S)-malate = fumarate + H2O. The protein operates within carbohydrate metabolism; tricarboxylic acid cycle; (S)-malate from fumarate: step 1/1. Involved in the TCA cycle. Catalyzes the stereospecific interconversion of fumarate to L-malate. The polypeptide is Fumarate hydratase class II (Brucella melitensis biotype 1 (strain ATCC 23456 / CCUG 17765 / NCTC 10094 / 16M)).